Consider the following 88-residue polypeptide: Large ribosomal subunit protein bL27 (88 aa).

The tract at residues 1–21 (MAHKKGTGSTRNGRDSRAQRL) is disordered.

Belongs to the bacterial ribosomal protein bL27 family.

In Picosynechococcus sp. (strain ATCC 27264 / PCC 7002 / PR-6) (Agmenellum quadruplicatum), this protein is Large ribosomal subunit protein bL27.